The sequence spans 148 residues: Deoxyuridine 5'-triphosphate nucleotidohydrolase (148 aa).

Residues 67-69, Asn80, 84-86, and Met94 each bind substrate; these read RSG and LID.

This sequence belongs to the dUTPase family. Mg(2+) is required as a cofactor.

The catalysed reaction is dUTP + H2O = dUMP + diphosphate + H(+). Its pathway is pyrimidine metabolism; dUMP biosynthesis; dUMP from dCTP (dUTP route): step 2/2. In terms of biological role, this enzyme is involved in nucleotide metabolism: it produces dUMP, the immediate precursor of thymidine nucleotides and it decreases the intracellular concentration of dUTP so that uracil cannot be incorporated into DNA. This Burkholderia thailandensis (strain ATCC 700388 / DSM 13276 / CCUG 48851 / CIP 106301 / E264) protein is Deoxyuridine 5'-triphosphate nucleotidohydrolase.